We begin with the raw amino-acid sequence, 751 residues long: NAD(P)H-quinone oxidoreductase subunit 5, chloroplastic (751 aa).

Transmembrane regions (helical) follow at residues 9-29 (WIIP…LIIF), 40-60 (WAFP…KLSI), 89-109 (VDPL…LVLI), 125-145 (FAYL…SNFI), 147-167 (IYIF…FWFT), 185-205 (GDFG…SFEF), 219-239 (NEVH…GAVA), 258-278 (TPIS…FLVA), 280-300 (LFPL…VGII), 327-347 (LGYM…FHLI), 354-374 (ALLF…VGYS), 396-416 (TAFL…CFWS), 425-445 (WLYS…TAFY), 543-563 (LFPL…GIPF), 599-619 (FLTN…LASF), and 719-739 (ISSY…IYYF).

It belongs to the complex I subunit 5 family. In terms of assembly, NDH is composed of at least 16 different subunits, 5 of which are encoded in the nucleus.

It localises to the plastid. The protein localises to the chloroplast thylakoid membrane. It catalyses the reaction a plastoquinone + NADH + (n+1) H(+)(in) = a plastoquinol + NAD(+) + n H(+)(out). It carries out the reaction a plastoquinone + NADPH + (n+1) H(+)(in) = a plastoquinol + NADP(+) + n H(+)(out). In terms of biological role, NDH shuttles electrons from NAD(P)H:plastoquinone, via FMN and iron-sulfur (Fe-S) centers, to quinones in the photosynthetic chain and possibly in a chloroplast respiratory chain. The immediate electron acceptor for the enzyme in this species is believed to be plastoquinone. Couples the redox reaction to proton translocation, and thus conserves the redox energy in a proton gradient. This Fagopyrum esculentum subsp. ancestrale (Wild buckwheat) protein is NAD(P)H-quinone oxidoreductase subunit 5, chloroplastic (ndhF).